A 565-amino-acid chain; its full sequence is NAD-dependent malic enzyme (565 aa).

Catalysis depends on Tyr-104, which acts as the Proton donor. Residue Arg-157 participates in NAD(+) binding. The active-site Proton acceptor is Lys-175. A divalent metal cation contacts are provided by Glu-246, Asp-247, and Asp-270. NAD(+) contacts are provided by Asp-270 and Asn-418.

Belongs to the malic enzymes family. As to quaternary structure, homotetramer. Requires Mg(2+) as cofactor. Mn(2+) serves as cofactor.

It catalyses the reaction (S)-malate + NAD(+) = pyruvate + CO2 + NADH. It carries out the reaction oxaloacetate + H(+) = pyruvate + CO2. This is NAD-dependent malic enzyme from Escherichia coli O9:H4 (strain HS).